A 670-amino-acid polypeptide reads, in one-letter code: Probable ATP-citrate synthase subunit 1 (670 aa).

The segment at 1-22 (MPSATTASTNGANGASASPAPG) is disordered. Residues 257-277 (LLRY…EVGG) and 308-334 (FKTE…KNKS) each bind ATP. Position 274 (E274) interacts with Mg(2+). H316 functions as the Tele-phosphohistidine intermediate in the catalytic mechanism. 335–345 (MREAGFYVPDT) contributes to the CoA binding site.

The protein belongs to the succinate/malate CoA ligase alpha subunit family. In terms of assembly, composed of two subunits.

It is found in the cytoplasm. It catalyses the reaction oxaloacetate + acetyl-CoA + ADP + phosphate = citrate + ATP + CoA. Functionally, catalyzes the formation of cytosolic acetyl-CoA, which is mainly used for the biosynthesis of fatty acids and sterols. The sequence is that of Probable ATP-citrate synthase subunit 1 from Neurospora crassa (strain ATCC 24698 / 74-OR23-1A / CBS 708.71 / DSM 1257 / FGSC 987).